A 637-amino-acid chain; its full sequence is Biosynthetic arginine decarboxylase (637 aa).

K101 is subject to N6-(pyridoxal phosphate)lysine. Residue 286–296 (FDVGGGLAVDY) coordinates substrate.

This sequence belongs to the Orn/Lys/Arg decarboxylase class-II family. SpeA subfamily. The cofactor is Mg(2+). Requires pyridoxal 5'-phosphate as cofactor.

It catalyses the reaction L-arginine + H(+) = agmatine + CO2. It functions in the pathway amine and polyamine biosynthesis; agmatine biosynthesis; agmatine from L-arginine: step 1/1. Catalyzes the biosynthesis of agmatine from arginine. The polypeptide is Biosynthetic arginine decarboxylase (Shewanella piezotolerans (strain WP3 / JCM 13877)).